The following is a 317-amino-acid chain: UDP-3-O-acylglucosamine N-acyltransferase (317 aa).

The active-site Proton acceptor is the H229.

The protein belongs to the transferase hexapeptide repeat family. LpxD subfamily. As to quaternary structure, homotrimer.

It carries out the reaction a UDP-3-O-[(3R)-3-hydroxyacyl]-alpha-D-glucosamine + a (3R)-hydroxyacyl-[ACP] = a UDP-2-N,3-O-bis[(3R)-3-hydroxyacyl]-alpha-D-glucosamine + holo-[ACP] + H(+). The protein operates within bacterial outer membrane biogenesis; LPS lipid A biosynthesis. Its function is as follows. Catalyzes the N-acylation of UDP-3-O-acylglucosamine using 3-hydroxyacyl-ACP as the acyl donor. Is involved in the biosynthesis of lipid A, a phosphorylated glycolipid that anchors the lipopolysaccharide to the outer membrane of the cell. This chain is UDP-3-O-acylglucosamine N-acyltransferase, found in Campylobacter curvus (strain 525.92).